The following is a 356-amino-acid chain: Holliday junction branch migration complex subunit RuvB (356 aa).

The segment at 13 to 197 is large ATPase domain (RuvB-L); sequence LPPARRMLSA…FGIVARLEFY (185 aa). ATP-binding positions include Leu36, Arg37, Gly78, Lys81, Thr82, Thr83, 144-146, Arg187, Tyr197, and Arg234; that span reads EDY. Thr82 is a binding site for Mg(2+). Residues 198-268 are small ATPAse domain (RuvB-S); it reads TPEELARIVK…IANRALAMLD (71 aa). The segment at 271 to 356 is head domain (RuvB-H); it reads PQGFDLMDRK…RGNAENLFEE (86 aa). 2 residues coordinate DNA: Arg326 and Arg331.

The protein belongs to the RuvB family. In terms of assembly, homohexamer. Forms an RuvA(8)-RuvB(12)-Holliday junction (HJ) complex. HJ DNA is sandwiched between 2 RuvA tetramers; dsDNA enters through RuvA and exits via RuvB. An RuvB hexamer assembles on each DNA strand where it exits the tetramer. Each RuvB hexamer is contacted by two RuvA subunits (via domain III) on 2 adjacent RuvB subunits; this complex drives branch migration. In the full resolvosome a probable DNA-RuvA(4)-RuvB(12)-RuvC(2) complex forms which resolves the HJ.

It localises to the cytoplasm. The catalysed reaction is ATP + H2O = ADP + phosphate + H(+). In terms of biological role, the RuvA-RuvB-RuvC complex processes Holliday junction (HJ) DNA during genetic recombination and DNA repair, while the RuvA-RuvB complex plays an important role in the rescue of blocked DNA replication forks via replication fork reversal (RFR). RuvA specifically binds to HJ cruciform DNA, conferring on it an open structure. The RuvB hexamer acts as an ATP-dependent pump, pulling dsDNA into and through the RuvAB complex. RuvB forms 2 homohexamers on either side of HJ DNA bound by 1 or 2 RuvA tetramers; 4 subunits per hexamer contact DNA at a time. Coordinated motions by a converter formed by DNA-disengaged RuvB subunits stimulates ATP hydrolysis and nucleotide exchange. Immobilization of the converter enables RuvB to convert the ATP-contained energy into a lever motion, pulling 2 nucleotides of DNA out of the RuvA tetramer per ATP hydrolyzed, thus driving DNA branch migration. The RuvB motors rotate together with the DNA substrate, which together with the progressing nucleotide cycle form the mechanistic basis for DNA recombination by continuous HJ branch migration. Branch migration allows RuvC to scan DNA until it finds its consensus sequence, where it cleaves and resolves cruciform DNA. The chain is Holliday junction branch migration complex subunit RuvB from Polaromonas naphthalenivorans (strain CJ2).